Reading from the N-terminus, the 803-residue chain is Leucine--tRNA ligase (803 aa).

Positions 40 to 51 match the 'HIGH' region motif; it reads PYPSGAGLHVGH. A 'KMSKS' region motif is present at residues 575–579; it reads KMSKS. An ATP-binding site is contributed by K578.

This sequence belongs to the class-I aminoacyl-tRNA synthetase family.

The protein localises to the cytoplasm. The catalysed reaction is tRNA(Leu) + L-leucine + ATP = L-leucyl-tRNA(Leu) + AMP + diphosphate. This chain is Leucine--tRNA ligase, found in Listeria innocua serovar 6a (strain ATCC BAA-680 / CLIP 11262).